We begin with the raw amino-acid sequence, 105 residues long: MKSFVVVALLVAVAAAVPLTPDGDAQILKYENDNIGVEGFQYGYETSNGIQHQESGQLNNVGTENEGIEVRGQFSYVGPDGVTYSVTYTAGQEGFKPVGAHIPVA.

A signal peptide spans 1 to 16 (MKSFVVVALLVAVAAA). Residues 37-105 (VEGFQYGYET…KPVGAHIPVA (69 aa)) enclose the Chitin-binding type R&amp;R domain.

This Hyalophora cecropia (Cecropia moth) protein is Flexible cuticle protein 12 (CP12).